The following is a 298-amino-acid chain: Bifunctional protein FolD (298 aa).

Residues 165–167 (GRG), Ser-194, and Ile-235 each bind NADP(+).

It belongs to the tetrahydrofolate dehydrogenase/cyclohydrolase family. Homodimer.

The enzyme catalyses (6R)-5,10-methylene-5,6,7,8-tetrahydrofolate + NADP(+) = (6R)-5,10-methenyltetrahydrofolate + NADPH. It catalyses the reaction (6R)-5,10-methenyltetrahydrofolate + H2O = (6R)-10-formyltetrahydrofolate + H(+). It participates in one-carbon metabolism; tetrahydrofolate interconversion. Catalyzes the oxidation of 5,10-methylenetetrahydrofolate to 5,10-methenyltetrahydrofolate and then the hydrolysis of 5,10-methenyltetrahydrofolate to 10-formyltetrahydrofolate. In Amoebophilus asiaticus (strain 5a2), this protein is Bifunctional protein FolD.